The sequence spans 885 residues: Dual serine/threonine and tyrosine protein kinase (885 aa).

A Protein kinase domain is found at 614-868; the sequence is PKLGRELGRG…PLLGIVQPGL (255 aa). Residues 620-628 and Lys-643 each bind ATP; that span reads LGRGQYGVV. Residue Asp-739 is the Proton acceptor of the active site.

This sequence belongs to the protein kinase superfamily. Ser/Thr protein kinase family.

Its subcellular location is the cytoplasm. It localises to the cell membrane. The protein localises to the apical cell membrane. It is found in the basolateral cell membrane. The protein resides in the cell junction. It catalyses the reaction L-seryl-[protein] + ATP = O-phospho-L-seryl-[protein] + ADP + H(+). The catalysed reaction is L-threonyl-[protein] + ATP = O-phospho-L-threonyl-[protein] + ADP + H(+). The enzyme catalyses L-tyrosyl-[protein] + ATP = O-phospho-L-tyrosyl-[protein] + ADP + H(+). Its function is as follows. May act as a positive regulator of ERK phosphorylation downstream of fibroblast growth factor-receptor activation. May induce both caspase-dependent apoptosis and caspase-independent cell death. Plays a role in the embryonic development. In Danio rerio (Zebrafish), this protein is Dual serine/threonine and tyrosine protein kinase (dstyk).